The chain runs to 92 residues: Small ribosomal subunit protein uS19 (92 aa).

This sequence belongs to the universal ribosomal protein uS19 family.

Functionally, protein S19 forms a complex with S13 that binds strongly to the 16S ribosomal RNA. The polypeptide is Small ribosomal subunit protein uS19 (Corynebacterium kroppenstedtii (strain DSM 44385 / JCM 11950 / CIP 105744 / CCUG 35717)).